The following is a 488-amino-acid chain: Probable glycine dehydrogenase (decarboxylating) subunit 2 (488 aa).

Lys-274 is subject to N6-(pyridoxal phosphate)lysine.

Belongs to the GcvP family. C-terminal subunit subfamily. The glycine cleavage system is composed of four proteins: P, T, L and H. In this organism, the P 'protein' is a heterodimer of two subunits. Pyridoxal 5'-phosphate is required as a cofactor.

The catalysed reaction is N(6)-[(R)-lipoyl]-L-lysyl-[glycine-cleavage complex H protein] + glycine + H(+) = N(6)-[(R)-S(8)-aminomethyldihydrolipoyl]-L-lysyl-[glycine-cleavage complex H protein] + CO2. The glycine cleavage system catalyzes the degradation of glycine. The P protein binds the alpha-amino group of glycine through its pyridoxal phosphate cofactor; CO(2) is released and the remaining methylamine moiety is then transferred to the lipoamide cofactor of the H protein. This is Probable glycine dehydrogenase (decarboxylating) subunit 2 from Listeria monocytogenes serovar 1/2a (strain ATCC BAA-679 / EGD-e).